The chain runs to 87 residues: DNA-directed RNA polymerase subunit omega (87 aa).

The protein belongs to the RNA polymerase subunit omega family. The RNAP catalytic core consists of 2 alpha, 1 beta, 1 beta' and 1 omega subunit. When a sigma factor is associated with the core the holoenzyme is formed, which can initiate transcription.

It carries out the reaction RNA(n) + a ribonucleoside 5'-triphosphate = RNA(n+1) + diphosphate. Promotes RNA polymerase assembly. Latches the N- and C-terminal regions of the beta' subunit thereby facilitating its interaction with the beta and alpha subunits. This is DNA-directed RNA polymerase subunit omega from Acidothermus cellulolyticus (strain ATCC 43068 / DSM 8971 / 11B).